Consider the following 113-residue polypeptide: MTPTNRHTHGQNAQHARRNAQQSRDAARRKLIAQHAALAEQRARNRRRSDTEQPTSDTTNPAAHSTLPAQRTNAQNAARNAHSTVPEQPTHATTAARARLYGLRLHNTATTDK.

The segment at 1–93 (MTPTNRHTHG…TVPEQPTHAT (93 aa)) is disordered. A compositionally biased stretch (low complexity) spans 11–22 (QNAQHARRNAQQ). Residues 52 to 63 (EQPTSDTTNPAA) are compositionally biased toward polar residues. The span at 69–81 (AQRTNAQNAARNA) shows a compositional bias: low complexity. Residues 82-93 (HSTVPEQPTHAT) are compositionally biased toward polar residues.

Belongs to the gas vesicle GvpI family. GvpF to GvpM interact with each other in vitro, and may form multi-subunit complex(es). Interacts with GvpC and GvpO.

It localises to the gas vesicle. In terms of biological role, proteins GvpF to GvpM might be involved in nucleating gas vesicle formation. A minor component of the gas vesicle. Gas vesicles are hollow, gas filled proteinaceous nanostructures found in several microbial planktonic microorganisms. They allow positioning of halobacteria at the optimal depth for growth in the poorly aerated, shallow brine pools of their habitat. Its function is as follows. Expression of 2 c-vac DNA fragments containing 2 divergently transcribed regions (gvpE-gvpF-gvpG-gvpH-gvpI-gvpJ-gvpK-gvpL-gvpM and gvpA-gvpC-gvpN-gvpO) allows H.volcanii to produce gas vesicles. This Halobacterium salinarum (strain ATCC 700922 / JCM 11081 / NRC-1) (Halobacterium halobium) protein is Gas vesicle protein I2.